A 763-amino-acid polypeptide reads, in one-letter code: Phosphoglycerol transferase I (763 aa).

Transmembrane regions (helical) follow at residues 4-19 (LLSFALFLASVLIYAW), 26-48 (WWFAATLTVLGLFVVLNITLFAS), 76-98 (YILPGIGIVLGLTAVFGALGWIL), and 105-127 (PHHFGYSLLALLLALGSVDASPA).

The protein belongs to the OpgB family.

Its subcellular location is the cell inner membrane. It catalyses the reaction a phosphatidylglycerol + a membrane-derived-oligosaccharide D-glucose = a 1,2-diacyl-sn-glycerol + a membrane-derived-oligosaccharide 6-(glycerophospho)-D-glucose.. Its pathway is glycan metabolism; osmoregulated periplasmic glucan (OPG) biosynthesis. Transfers a phosphoglycerol residue from phosphatidylglycerol to the membrane-bound nascent glucan backbones. The chain is Phosphoglycerol transferase I from Escherichia coli O157:H7.